The sequence spans 39 residues: Potassium channel toxin alpha-KTx 2.18 (39 aa).

3 disulfides stabilise this stretch: Cys7–Cys29, Cys13–Cys34, and Cys17–Cys36. Ile39 carries the isoleucine amide modification.

Belongs to the short scorpion toxin superfamily. Potassium channel inhibitor family. Alpha-KTx 02 subfamily. Expressed by the venom gland.

The protein localises to the secreted. Weakly blocks Kv1.3/KCNA3 voltage-gated potassium channels. This Centruroides limpidus (Mexican scorpion) protein is Potassium channel toxin alpha-KTx 2.18.